The primary structure comprises 177 residues: Large ribosomal subunit protein uL6 (177 aa).

This sequence belongs to the universal ribosomal protein uL6 family. As to quaternary structure, part of the 50S ribosomal subunit.

Functionally, this protein binds to the 23S rRNA, and is important in its secondary structure. It is located near the subunit interface in the base of the L7/L12 stalk, and near the tRNA binding site of the peptidyltransferase center. This chain is Large ribosomal subunit protein uL6, found in Neisseria gonorrhoeae (strain ATCC 700825 / FA 1090).